We begin with the raw amino-acid sequence, 426 residues long: Serine--tRNA ligase (426 aa).

An L-serine-binding site is contributed by 233–235 (TSE). 264-266 (RSE) is an ATP binding site. E287 is a binding site for L-serine. 351–354 (EISS) is a binding site for ATP. Position 387 (S387) interacts with L-serine.

Belongs to the class-II aminoacyl-tRNA synthetase family. Type-1 seryl-tRNA synthetase subfamily. As to quaternary structure, homodimer. The tRNA molecule binds across the dimer.

It is found in the cytoplasm. It catalyses the reaction tRNA(Ser) + L-serine + ATP = L-seryl-tRNA(Ser) + AMP + diphosphate + H(+). It carries out the reaction tRNA(Sec) + L-serine + ATP = L-seryl-tRNA(Sec) + AMP + diphosphate + H(+). Its pathway is aminoacyl-tRNA biosynthesis; selenocysteinyl-tRNA(Sec) biosynthesis; L-seryl-tRNA(Sec) from L-serine and tRNA(Sec): step 1/1. In terms of biological role, catalyzes the attachment of serine to tRNA(Ser). Is also able to aminoacylate tRNA(Sec) with serine, to form the misacylated tRNA L-seryl-tRNA(Sec), which will be further converted into selenocysteinyl-tRNA(Sec). This Xylella fastidiosa (strain 9a5c) protein is Serine--tRNA ligase.